A 1017-amino-acid polypeptide reads, in one-letter code: Centriole and centriolar satellite protein OFD1 (1017 aa).

The region spanning 69 to 101 is the LisH domain; that stretch reads LIGASNSLVADHLQRCGYEYSLSVFFPESGLAK. Coiled-coil stretches lie at residues 188–557 and 626–659; these read PHRS…ENEV and EFIA…RATQ. The segment at 609–666 is mediates homooligomerization; sequence PPYVNTATEASSPESDFEFIASSTKAKVRELEQEAERLEKAFRTYYQRATQNPSTSPQ. 4 disordered regions span residues 657 to 676, 685 to 705, 721 to 749, and 769 to 801; these read ATQN…SVNS, SSSM…QPLG, GSVV…RSLD, and LDRV…SFSG. Phosphoserine is present on residues Ser-664, Ser-670, Ser-687, Ser-722, Ser-737, Ser-747, Ser-791, and Ser-823. The span at 722-740 shows a compositional bias: low complexity; it reads SVVSRPRRTSSSTRLSSTP. The stretch at 895-966 forms a coiled coil; that stretch reads ELHMKERRQR…AHCENTLEKY (72 aa). Residues 897–988 show a composition bias toward basic and acidic residues; that stretch reads HMKERRQREE…ADKSSKKSGK (92 aa). The interval 897–1017 is disordered; sequence HMKERRQREE…FSHEEPDDMW (121 aa).

Belongs to the OFD1 family. Homooligomer. Interacts with LCA5. Interacts with RUVBL1; the interaction is direct and may mediate interaction with the NuA4 histone acetyltransferase complex. Interacts with SDCCAG8; the interaction is direct. Interacts with MAP1LC3B. Interacts with C2CD3; OFD1 may act as a negative regulator of C2CD3. Forms a complex with KIAA0753/OFIP and CEP20/FOR20; the interaction with CEP20 is detected only in the presence of KIAA0753. Interacts with PCM1; this interaction may be mediated by KIAA0753/OFIP. Interacts with TBC1D31; regulates OFD1 activity in cilium assembly. In terms of processing, phosphorylated. Phosphorylation at Ser-737, by the cAMP-dependent protein kinase PKA, triggers ubiquitination and proteasomal degradation of OFD1. Also increases its interaction with TBC1D31 and regulates its function in ciliogenesis. Post-translationally, ubiquitinated by PJA2, upon phosphorylation at Ser-737 by PKA, leads to the proteasomal degradation of OFD1.

It localises to the cytoplasm. It is found in the cytoskeleton. The protein resides in the microtubule organizing center. Its subcellular location is the centrosome. The protein localises to the centriole. It localises to the centriolar satellite. It is found in the cilium basal body. The protein resides in the nucleus. In terms of biological role, component of the centrioles controlling mother and daughter centrioles length. Recruits to the centriole IFT88 and centriole distal appendage-specific proteins including CEP164. Involved in the biogenesis of the cilium, a centriole-associated function. The cilium is a cell surface projection found in many vertebrate cells required to transduce signals important for development and tissue homeostasis. Plays an important role in development by regulating Wnt signaling and the specification of the left-right axis. Only OFD1 localized at the centriolar satellites is removed by autophagy, which is an important step in the ciliogenesis regulation. In Mus musculus (Mouse), this protein is Centriole and centriolar satellite protein OFD1 (Ofd1).